Consider the following 155-residue polypeptide: 6,7-dimethyl-8-ribityllumazine synthase (155 aa).

5-amino-6-(D-ribitylamino)uracil-binding positions include F22, 57 to 59, and 81 to 83; these read AYE and SVI. 86-87 contacts (2S)-2-hydroxy-3-oxobutyl phosphate; the sequence is GT. H88 (proton donor) is an active-site residue. A 5-amino-6-(D-ribitylamino)uracil-binding site is contributed by F113. Residue R127 coordinates (2S)-2-hydroxy-3-oxobutyl phosphate.

The protein belongs to the DMRL synthase family. As to quaternary structure, forms an icosahedral capsid composed of 60 subunits, arranged as a dodecamer of pentamers.

It catalyses the reaction (2S)-2-hydroxy-3-oxobutyl phosphate + 5-amino-6-(D-ribitylamino)uracil = 6,7-dimethyl-8-(1-D-ribityl)lumazine + phosphate + 2 H2O + H(+). It participates in cofactor biosynthesis; riboflavin biosynthesis; riboflavin from 2-hydroxy-3-oxobutyl phosphate and 5-amino-6-(D-ribitylamino)uracil: step 1/2. In terms of biological role, catalyzes the formation of 6,7-dimethyl-8-ribityllumazine by condensation of 5-amino-6-(D-ribitylamino)uracil with 3,4-dihydroxy-2-butanone 4-phosphate. This is the penultimate step in the biosynthesis of riboflavin. The chain is 6,7-dimethyl-8-ribityllumazine synthase from Photobacterium phosphoreum.